We begin with the raw amino-acid sequence, 97 residues long: Large ribosomal subunit protein bL27 (97 aa).

The propeptide occupies 1–12 (MLKMTLNNLQLF). A disordered region spans residues 13–37 (AHKKGGGSTSNGRDSQAKRLGAKAA).

This sequence belongs to the bacterial ribosomal protein bL27 family. In terms of processing, the N-terminus is cleaved by ribosomal processing cysteine protease Prp.

This chain is Large ribosomal subunit protein bL27, found in Streptococcus pneumoniae serotype 2 (strain D39 / NCTC 7466).